The following is a 66-amino-acid chain: Nigrocin-2ISb (66 aa).

Residues 1 to 22 form the signal peptide; the sequence is MFTLKKSMLLLFFLGTINLSLC. A propeptide spans 23–43 (removed in mature form); sequence QEERDAEEERRDEDNAKMEEI. An intrachain disulfide couples Cys-60 to Cys-66.

As to expression, expressed by the skin glands.

The protein localises to the secreted. Its function is as follows. Has antimicrobial activity against Gram-negative bacterium E.coli ATCC 8739 (MIC=50 ug), against Gram positive bacteria S.aureus ATCC 6538 (MIC=3.1 ug), methicillin-resistant S.aureus ATCC 43300 (MIC=12.5 ug), B.subtilis ATCC 6633 (MIC=12.5 ug) and against fungus C.albicans ATCC 90028 (MIC=50 ug). This chain is Nigrocin-2ISb, found in Odorrana ishikawae (Ishikawa's frog).